The chain runs to 550 residues: Hydroxylamine reductase (550 aa).

The [2Fe-2S] cluster site is built by cysteine 3, cysteine 6, cysteine 18, and cysteine 25. Residues histidine 249, glutamate 273, cysteine 317, cysteine 405, cysteine 433, cysteine 458, glutamate 492, and lysine 494 each coordinate hybrid [4Fe-2O-2S] cluster. A Cysteine persulfide modification is found at cysteine 405.

It belongs to the HCP family. [2Fe-2S] cluster is required as a cofactor. It depends on hybrid [4Fe-2O-2S] cluster as a cofactor.

It localises to the cytoplasm. The enzyme catalyses A + NH4(+) + H2O = hydroxylamine + AH2 + H(+). Catalyzes the reduction of hydroxylamine to form NH(3) and H(2)O. This is Hydroxylamine reductase from Yersinia pseudotuberculosis serotype IB (strain PB1/+).